Reading from the N-terminus, the 731-residue chain is Actin filament-associated protein 1 (731 aa).

An N-acetylmethionine modification is found at Met-1. Positions 56–90 are disordered; the sequence is NNLPAPPQMPLPEIPQPWLPPDSGPPPLPTSSLPE. Over residues 59 to 84 the composition is skewed to pro residues; the sequence is PAPPQMPLPEIPQPWLPPDSGPPPLP. Positions 70-73 match the SH3-binding motif; the sequence is PQPW. The SH2-binding 1 signature appears at 93 to 96; that stretch reads YEEA. Residues 118-139 are disordered; that stretch reads SSSYESYDEEEEDGKGKKTRHQ. The PH 1 domain occupies 152-248; the sequence is DAKICAFLLR…WLKVIKEAYS (97 aa). Residues 252–318 are disordered; sequence GPVDPECSPP…SKSEAKGTVS (67 aa). Positions 271-284 are enriched in basic and acidic residues; that stretch reads AELEKKLSSERPSS. A phosphoserine mark is found at Ser-283 and Ser-284. The 95-residue stretch at 348 to 442 folds into the PH 2 domain; that stretch reads DVPTCGYLNV…WIGILLAETG (95 aa). The short motif at 452-457 is the SH2-binding 2 element; that stretch reads YDYIDV. Residues 513 to 544 are disordered; sequence KNKKPPASSNGVPVKGKAPSSQQKKVETAGGV. Ser-549 bears the Phosphoserine mark. The stretch at 558-649 forms a coiled coil; sequence KNRVEADAKR…VKESLKKALA (92 aa). Residues 595–638 are interaction with F-actin; that stretch reads DLRAAIEVNAGRKTQAALEDKLKRLEEECKQREAERVSLELELT. The interval 658–731 is disordered; that stretch reads IEPRSGTSSP…AKEWELKNGT (74 aa). Residues Ser-665, Ser-666, and Ser-669 each carry the phosphoserine modification. At Thr-676 the chain carries Phosphothreonine. The segment covering 678 to 687 has biased composition (polar residues); the sequence is ENSPISSCDT. Residues Ser-680 and Ser-688 each carry the phosphoserine modification. The span at 721–731 shows a compositional bias: basic and acidic residues; that stretch reads KAKEWELKNGT.

In terms of assembly, monomer and homomultimer. Interacts via its C-terminus with F-actin; probably involving AFAP1 multimers. Interacts with activated SRC SH3-SH2 domains. Interacts via its PH 1 domain with PRKCA, PRKCB and PRKCI. Phosphorylated on tyrosine residues by SRC.

The protein localises to the cytoplasm. Its subcellular location is the cytoskeleton. It is found in the stress fiber. Can cross-link actin filaments into both network and bundle structures. May modulate changes in actin filament integrity and induce lamellipodia formation. May function as an adapter molecule that links other proteins, such as SRC and PKC to the actin cytoskeleton. This Mus musculus (Mouse) protein is Actin filament-associated protein 1 (Afap1).